The primary structure comprises 320 residues: Ferrochelatase (320 aa).

Fe cation-binding residues include histidine 194 and glutamate 275.

This sequence belongs to the ferrochelatase family.

The protein localises to the cytoplasm. The enzyme catalyses heme b + 2 H(+) = protoporphyrin IX + Fe(2+). The protein operates within porphyrin-containing compound metabolism; protoheme biosynthesis; protoheme from protoporphyrin-IX: step 1/1. Functionally, catalyzes the ferrous insertion into protoporphyrin IX. The sequence is that of Ferrochelatase from Xylella fastidiosa (strain M23).